Here is a 392-residue protein sequence, read N- to C-terminus: ATP phosphoribosyltransferase regulatory subunit (392 aa).

Belongs to the class-II aminoacyl-tRNA synthetase family. HisZ subfamily. Heteromultimer composed of HisG and HisZ subunits.

The protein resides in the cytoplasm. It participates in amino-acid biosynthesis; L-histidine biosynthesis; L-histidine from 5-phospho-alpha-D-ribose 1-diphosphate: step 1/9. Required for the first step of histidine biosynthesis. May allow the feedback regulation of ATP phosphoribosyltransferase activity by histidine. This is ATP phosphoribosyltransferase regulatory subunit from Marinomonas sp. (strain MWYL1).